Consider the following 83-residue polypeptide: uncharacterized protein (83 aa).

It localises to the plastid. The protein localises to the chloroplast. This is an uncharacterized protein from Pinus thunbergii (Japanese black pine).